We begin with the raw amino-acid sequence, 819 residues long: Tegument protein UL47 homolog (819 aa).

A compositionally biased stretch (basic residues) spans M1–R15. 2 disordered regions span residues M1–P42 and L58–S221. The short motif at S11–R31 is the Nuclear localization signal element. Polar residues predominate over residues Y32–P42. Positions M62–D72 are enriched in acidic residues. Over residues S82–T93 the composition is skewed to polar residues. Residues S94–N109 show a composition bias toward basic and acidic residues. Repeat copies occupy residues D117–E132, D133–E148, D149–E164, D165–E190, and D191–E206. The 6 X 16 AA approximate tandem repeats stretch occupies residues D117–D218. Residues A118–Y219 show a composition bias toward acidic residues. Residues D207 to D218 form a 1-6; truncated repeat. Residues Q785–D807 carry the Nuclear export signal motif.

This sequence belongs to the alphaherpesvirinae HHV-1 UL47 family. Interacts with US3 kinase. Interacts with ORF24 and ORF27; these interactions seem important for efficient virion nuclear egress. Interacts with ORF17/VHS. Interacts with ORF9. Post-translationally, phosphorylated by US3. This phosphorylation is required for proper nuclear localization.

Its subcellular location is the virion tegument. The protein localises to the host nucleus. It localises to the host cytoplasm. Tegument protein that can bind to various RNA transcripts. Plays a role in the attenuation of selective viral and cellular mRNA degradation by modulating the activity of host shutoff RNase ORF17/VHS. Also plays a role in the primary envelopment of virions in the perinuclear space, probably by interacting with two nuclear egress proteins ORF24 and ORF27. This chain is Tegument protein UL47 homolog, found in Varicella-zoster virus (strain Dumas) (HHV-3).